The chain runs to 37 residues: Potassium channel toxin alpha-KTx 1.11 (37 aa).

Disulfide bonds link C7–C28, C13–C33, and C17–C35.

This sequence belongs to the short scorpion toxin superfamily. Potassium channel inhibitor family. Alpha-KTx 01 subfamily. As to expression, expressed by the venom gland.

The protein resides in the secreted. Functionally, reversibly blocks the high conductance calcium-activated potassium channels composed of only alpha subunits (KCa1.1/KCNMA1). Unreversibly blocks the high conductance calcium-activated potassium channels composed of alpha and beta1 subunits (KCNMA1 and KCNMB1). Unreversibly and weakly blocks the high conductance calcium-activated potassium channels composed of alpha and beta4 (KCNMA1 and KCNMB4). The polypeptide is Potassium channel toxin alpha-KTx 1.11 (Centruroides noxius (Mexican scorpion)).